The following is a 184-amino-acid chain: MEHQVSAALREFTQRYVAQWQQQHGDWPSSHALYGIPSPCVVYSRDDCVFWRPEPGRGEDLEGIGRALDIRLHPALAPFFTTQYAGDMRARWNEIEMDLVQVWSVEDLHRLQENQIGHLVTQRRLKLSPTLFLASTADELSMVTLCNLSGSVLLEQFGSPQRRVLAQTLTEFLAELQPLAQEVG.

The protein belongs to the Syd family.

Its subcellular location is the cell inner membrane. Functionally, interacts with the SecY protein in vivo. May bind preferentially to an uncomplexed state of SecY, thus functioning either as a chelating agent for excess SecY in the cell or as a regulatory factor that negatively controls the translocase function. In Edwardsiella ictaluri (strain 93-146), this protein is Protein Syd.